We begin with the raw amino-acid sequence, 413 residues long: Serine protease inhibitor A3L (413 aa).

A signal peptide spans 1 to 28 (MAFIAALGLLMAGICPAVLCDGTLGRDT). Position 30 is a phosphoserine (serine 30). 4 N-linked (GlcNAc...) asparagine glycosylation sites follow: asparagine 102, asparagine 182, asparagine 220, and asparagine 267. An RCL region spans residues 365 to 389 (GTEATAATGVATVIRRQPRTLNFNR).

Belongs to the serpin family. Post-translationally, N-glycosylated. In terms of tissue distribution, liver.

The protein resides in the secreted. The sequence is that of Serine protease inhibitor A3L (Serpina3l) from Rattus norvegicus (Rat).